A 115-amino-acid polypeptide reads, in one-letter code: uncharacterized protein (115 aa).

The span at 90–100 shows a compositional bias: basic residues; that stretch reads THFGRPATRRR. Residues 90–115 are disordered; that stretch reads THFGRPATRRRPLGEREVNPSARSLG.

This is an uncharacterized protein from Saccharomyces cerevisiae (strain ATCC 204508 / S288c) (Baker's yeast).